The primary structure comprises 102 residues: Citrate lyase acyl carrier protein (102 aa).

O-(phosphoribosyl dephospho-coenzyme A)serine is present on Ser-14.

The protein belongs to the CitD family. Oligomer with a subunit composition of (alpha,beta,gamma)6.

It is found in the cytoplasm. Its function is as follows. Covalent carrier of the coenzyme of citrate lyase. The sequence is that of Citrate lyase acyl carrier protein from Serratia proteamaculans (strain 568).